A 420-amino-acid chain; its full sequence is L-rhamnose isomerase (420 aa).

Residues His-264, Asp-296, and Asp-298 each contribute to the Mn(2+) site.

This sequence belongs to the rhamnose isomerase family. Requires Mn(2+) as cofactor.

The protein localises to the cytoplasm. It carries out the reaction L-rhamnopyranose = L-rhamnulose. It functions in the pathway carbohydrate degradation; L-rhamnose degradation; glycerone phosphate from L-rhamnose: step 1/3. Functionally, catalyzes the interconversion of L-rhamnose and L-rhamnulose. The protein is L-rhamnose isomerase of Listeria monocytogenes serotype 4b (strain F2365).